The sequence spans 385 residues: S-adenosylmethionine synthase (385 aa).

His-15 contacts ATP. Asp-17 contributes to the Mg(2+) binding site. Glu-43 lines the K(+) pocket. L-methionine-binding residues include Glu-56 and Gln-99. Residues 99 to 109 (QSPDINQGVDR) are flexible loop. ATP-binding positions include 164–166 (DAK), 230–231 (RF), Asp-239, 245–246 (RK), Ala-262, and Lys-266. Asp-239 is an L-methionine binding site. Position 270 (Lys-270) interacts with L-methionine.

The protein belongs to the AdoMet synthase family. In terms of assembly, homotetramer; dimer of dimers. Requires Mg(2+) as cofactor. K(+) is required as a cofactor.

The protein localises to the cytoplasm. It catalyses the reaction L-methionine + ATP + H2O = S-adenosyl-L-methionine + phosphate + diphosphate. It participates in amino-acid biosynthesis; S-adenosyl-L-methionine biosynthesis; S-adenosyl-L-methionine from L-methionine: step 1/1. Catalyzes the formation of S-adenosylmethionine (AdoMet) from methionine and ATP. The overall synthetic reaction is composed of two sequential steps, AdoMet formation and the subsequent tripolyphosphate hydrolysis which occurs prior to release of AdoMet from the enzyme. This Hamiltonella defensa subsp. Acyrthosiphon pisum (strain 5AT) protein is S-adenosylmethionine synthase.